The sequence spans 217 residues: GrpE protein homolog 1, mitochondrial (217 aa).

The N-terminal 27 residues, 1-27 (MAARCVRLARGSLPAFALSLRSSPRLL), are a transit peptide targeting the mitochondrion. At K94 the chain carries N6-acetyllysine; alternate. At K94 the chain carries N6-succinyllysine; alternate. Residue K100 is modified to N6-acetyllysine. An N6-succinyllysine modification is found at K120. K215 carries the N6-acetyllysine; alternate modification. K215 is modified (N6-succinyllysine; alternate).

This sequence belongs to the GrpE family. Probable component of the PAM complex at least composed of a mitochondrial HSP70 protein, GRPEL1 or GRPEL2, TIMM44, TIMM16/PAM16 and TIMM14/DNAJC19. Binds to HSP70, HSC70 and HSJ1B.

Its subcellular location is the mitochondrion matrix. Its function is as follows. Essential component of the PAM complex, a complex required for the translocation of transit peptide-containing proteins from the inner membrane into the mitochondrial matrix in an ATP-dependent manner. Seems to control the nucleotide-dependent binding of mitochondrial HSP70 to substrate proteins. This Bos taurus (Bovine) protein is GrpE protein homolog 1, mitochondrial (GRPEL1).